The sequence spans 97 residues: Osteocalcin (97 aa).

Residues 1 to 20 (MKAAALLLLAALLTFSLCRS) form the signal peptide. Positions 21–48 (APDGSDARSAKAFISHRQRAEMVRRQKR) are excised as a propeptide. One can recognise a Gla domain in the interval 49 to 95 (HYAQDSGVAGAPPNPLEAQREVCELSPDCDELADQIGFQEAYRRFYG). The Ca(2+) site is built by Glu-65, Glu-69, Glu-72, and Asp-78. 4-carboxyglutamate occurs at positions 65, 69, and 72. Cys-71 and Cys-77 are oxidised to a cystine.

The protein belongs to the osteocalcin/matrix Gla protein family. Gamma-carboxyglutamate residues are formed by vitamin K dependent carboxylation by GGCX. These residues are essential for the binding of calcium.

Its subcellular location is the secreted. Its function is as follows. The carboxylated form is one of the main organic components of the bone matrix, which constitutes 1-2% of the total bone protein. The carboxylated form binds strongly to apatite and calcium. The chain is Osteocalcin (BGLAP) from Gallus gallus (Chicken).